We begin with the raw amino-acid sequence, 525 residues long: Serine/threonine-protein kinase YPK3 (525 aa).

Phosphoserine occurs at positions 90 and 105. Phosphothreonine is present on threonine 107. The 297-residue stretch at 128 to 424 folds into the Protein kinase domain; sequence FKPVRVLGQG…KTGANNKPTK (297 aa). Residues 134-142 and lysine 157 contribute to the ATP site; that span reads LGQGAYGKV. A disordered region spans residues 170–193; sequence ATDSKREDEDKNDGNNNDNDDGLS. The segment covering 172–182 has biased composition (basic and acidic residues); the sequence is DSKREDEDKND. Aspartate 277 serves as the catalytic Proton acceptor. Serine 321 carries the phosphoserine; by PKH1 or PKH2 modification. Residues 445 to 524 enclose the AGC-kinase C-terminal domain; it reads RKIDWKLLES…KASGSYLEKY (80 aa). Threonine 490 carries the post-translational modification Phosphothreonine; by TORC1. Serine 513 is subject to Phosphoserine; by TORC1.

It belongs to the protein kinase superfamily. AGC Ser/Thr protein kinase family. S6 kinase subfamily. In terms of processing, phosphorylated by PKA in a TORC1-dependent manner. Phosphorylation at PKA consensus sites RRxS/T decreases upon rapamycin treatment.

It localises to the cytoplasm. The enzyme catalyses L-seryl-[protein] + ATP = O-phospho-L-seryl-[protein] + ADP + H(+). It catalyses the reaction L-threonyl-[protein] + ATP = O-phospho-L-threonyl-[protein] + ADP + H(+). Its function is as follows. AGC kinase which plays a role in TOR complex 1 (TORC1) signaling pathway which mediates temporal control of cell growth in response to nutrients. Required for phosphorylation of ribosomal protein S6 (RPS6A/RPS6B) at 'Ser-232' and 'Ser-233'. In Saccharomyces cerevisiae (strain ATCC 204508 / S288c) (Baker's yeast), this protein is Serine/threonine-protein kinase YPK3.